The following is a 302-amino-acid chain: Homoserine kinase (302 aa).

Residue 90-100 (KPGSGLGSSSA) participates in ATP binding.

Belongs to the GHMP kinase family. Homoserine kinase subfamily.

It localises to the cytoplasm. It catalyses the reaction L-homoserine + ATP = O-phospho-L-homoserine + ADP + H(+). It functions in the pathway amino-acid biosynthesis; L-threonine biosynthesis; L-threonine from L-aspartate: step 4/5. Its function is as follows. Catalyzes the ATP-dependent phosphorylation of L-homoserine to L-homoserine phosphate. This is Homoserine kinase from Methanococcus vannielii (strain ATCC 35089 / DSM 1224 / JCM 13029 / OCM 148 / SB).